The following is a 91-amino-acid chain: Small ribosomal subunit protein uS15 (91 aa).

This sequence belongs to the universal ribosomal protein uS15 family. As to quaternary structure, part of the 30S ribosomal subunit. Forms a bridge to the 50S subunit in the 70S ribosome, contacting the 23S rRNA.

Its function is as follows. One of the primary rRNA binding proteins, it binds directly to 16S rRNA where it helps nucleate assembly of the platform of the 30S subunit by binding and bridging several RNA helices of the 16S rRNA. In terms of biological role, forms an intersubunit bridge (bridge B4) with the 23S rRNA of the 50S subunit in the ribosome. In Hydrogenobaculum sp. (strain Y04AAS1), this protein is Small ribosomal subunit protein uS15.